Reading from the N-terminus, the 468-residue chain is Intramembrane protease 2 (468 aa).

Over 1 to 22 the chain is Lumenal; sequence MAEAATEIPPTASNVTVFTFEE. N-linked (GlcNAc...) asparagine glycosylation is present at asparagine 14. A helical membrane pass occupies residues 23-43; that stretch reads QATSSLALYGMSILCIIIGSI. The Cytoplasmic portion of the chain corresponds to 44 to 70; it reads RSAQYIRTNIDKKRLIEGSITMREARK. A helical transmembrane segment spans residues 71 to 91; it reads FPISASLVLFGLYLFFKPAAE. Over 92–168 the chain is Lumenal; the sequence is RFLWVARVFQ…TNLPTIQKAE (77 aa). N-linked (GlcNAc...) asparagine glycans are attached at residues asparagine 114 and asparagine 123. The helical transmembrane segment at 169-189 threads the bilayer; sequence CMQLLTFLICFEGVNAFASLL. Over 190-247 the chain is Cytoplasmic; the sequence is KPFVTAFLKKMPLVPSFLRFNAPYLFSLKKGNKEMEEGDIEDAKKKETEYLFKIDFDR. The helical transmembrane segment at 248 to 265 threads the bilayer; that stretch reads YDIIALLMCSPILISHLL. Residues 266-267 are Lumenal-facing; it reads KR. A helical transmembrane segment spans residues 268-284; the sequence is HWITNNIIGVSFSILGI. Residues 285 to 296 are Cytoplasmic-facing; it reads ERLHLASFKAGS. The helical transmembrane segment at 297-317 threads the bilayer; it reads LLLVGLFFYDIFWVFGTDVMT. The active site involves aspartate 306. Residues 318-343 lie on the Lumenal side of the membrane; that stretch reads SVAKGIDAPILLQFPQDIYRNGIMEA. Residues 344 to 364 form a helical membrane-spanning segment; it reads SKHSMLGLGDIVIPGIFIALL. Residue aspartate 353 is part of the active site. Residues 365-388 are Cytoplasmic-facing; the sequence is RRFDYRVVQTTAESKAPQGSLKGR. A helical membrane pass occupies residues 389–409; that stretch reads YYFVVTVVAYMAGLFITMAVM. Residues 410-415 are Lumenal-facing; it reads HHFKAA. A helical transmembrane segment spans residues 416 to 436; that stretch reads QPALLYLVPCCLFVPLLLAVI. The short motif at 417 to 419 is the PAL element; the sequence is PAL. The Cytoplasmic portion of the chain corresponds to 437 to 468; it reads RGELSALWNYDESRHVDNEENRKKVDSGKKNN.

The protein belongs to the peptidase A22B family.

The protein resides in the membrane. Its subcellular location is the endoplasmic reticulum membrane. Functionally, acts as intramembrane protease. In larvae, required for the complete shedding of the cuticle during molting, possibly by regulating cholesterol uptake via lrp-1. Involved in embryonic and larval development. In Caenorhabditis elegans, this protein is Intramembrane protease 2.